The primary structure comprises 195 residues: Molybdenum cofactor guanylyltransferase (195 aa).

GTP-binding positions include 10–12, Lys23, Asn51, Asp69, and Asp99; that span reads LAG. Asp99 lines the Mg(2+) pocket.

Belongs to the MobA family. Monomer. Mg(2+) is required as a cofactor.

It is found in the cytoplasm. It carries out the reaction Mo-molybdopterin + GTP + H(+) = Mo-molybdopterin guanine dinucleotide + diphosphate. Functionally, transfers a GMP moiety from GTP to Mo-molybdopterin (Mo-MPT) cofactor (Moco or molybdenum cofactor) to form Mo-molybdopterin guanine dinucleotide (Mo-MGD) cofactor. The sequence is that of Molybdenum cofactor guanylyltransferase from Histophilus somni (strain 129Pt) (Haemophilus somnus).